The chain runs to 190 residues: CD70 antigen (190 aa).

Over 1 to 17 (MEEEGSGCNVPRLPWAS) the chain is Cytoplasmic. The helical transmembrane segment at 18-38 (ILRAALLLLLIGMVIYCFLCG) threads the bilayer. Residues 39–190 (QRFTQQQLDS…TFFGVQLVRP (152 aa)) lie on the Extracellular side of the membrane. The region spanning 52–188 (DLAELLLNHT…DETFFGVQLV (137 aa)) is the THD domain. N-linked (GlcNAc...) asparagine glycosylation is found at Asn-59 and Asn-110. 2 disulfides stabilise this stretch: Cys-111-Cys-148 and Cys-130-Cys-165. Asn-167 carries an N-linked (GlcNAc...) asparagine glycan.

This sequence belongs to the tumor necrosis factor family. As to quaternary structure, homotrimer. In terms of processing, N-glycosylated.

Its subcellular location is the cell membrane. Functionally, expressed at the plasma membrane of B cells, it is the ligand of the CD27 receptor which is specifically expressed at the surface of T cells. The CD70-CD27 signaling pathway mediates antigen-specific T cell activation and expansion which in turn provides immune surveillance of B cells. This is CD70 antigen from Sus scrofa (Pig).